We begin with the raw amino-acid sequence, 179 residues long: uncharacterized protein (179 aa).

The stretch at 139 to 172 (IEDLGKYIKSDRIEKEALREELEKILNTLVKHLE) forms a coiled coil.

This is an uncharacterized protein from Methanocaldococcus jannaschii (strain ATCC 43067 / DSM 2661 / JAL-1 / JCM 10045 / NBRC 100440) (Methanococcus jannaschii).